Consider the following 201-residue polypeptide: Ribosomal RNA large subunit methyltransferase E (201 aa).

Positions 49, 51, 69, 87, and 111 each coordinate S-adenosyl-L-methionine. Catalysis depends on lysine 151, which acts as the Proton acceptor.

Belongs to the class I-like SAM-binding methyltransferase superfamily. RNA methyltransferase RlmE family.

Its subcellular location is the cytoplasm. It catalyses the reaction uridine(2552) in 23S rRNA + S-adenosyl-L-methionine = 2'-O-methyluridine(2552) in 23S rRNA + S-adenosyl-L-homocysteine + H(+). Specifically methylates the uridine in position 2552 of 23S rRNA at the 2'-O position of the ribose in the fully assembled 50S ribosomal subunit. This Nitratidesulfovibrio vulgaris (strain DSM 19637 / Miyazaki F) (Desulfovibrio vulgaris) protein is Ribosomal RNA large subunit methyltransferase E.